Reading from the N-terminus, the 142-residue chain is Large ribosomal subunit protein uL11 (142 aa).

The protein belongs to the universal ribosomal protein uL11 family. In terms of assembly, part of the ribosomal stalk of the 50S ribosomal subunit. Interacts with L10 and the large rRNA to form the base of the stalk. L10 forms an elongated spine to which L12 dimers bind in a sequential fashion forming a multimeric L10(L12)X complex. Post-translationally, one or more lysine residues are methylated.

Its function is as follows. Forms part of the ribosomal stalk which helps the ribosome interact with GTP-bound translation factors. This Xylella fastidiosa (strain 9a5c) protein is Large ribosomal subunit protein uL11.